We begin with the raw amino-acid sequence, 190 residues long: Potassium-transporting ATPase KdpC subunit (190 aa).

Residues 10–30 (TFIFLLLITGGVYPLLTTVLG) form a helical membrane-spanning segment.

The protein belongs to the KdpC family. In terms of assembly, the system is composed of three essential subunits: KdpA, KdpB and KdpC.

It is found in the cell inner membrane. Functionally, part of the high-affinity ATP-driven potassium transport (or Kdp) system, which catalyzes the hydrolysis of ATP coupled with the electrogenic transport of potassium into the cytoplasm. This subunit acts as a catalytic chaperone that increases the ATP-binding affinity of the ATP-hydrolyzing subunit KdpB by the formation of a transient KdpB/KdpC/ATP ternary complex. In Escherichia coli (strain 55989 / EAEC), this protein is Potassium-transporting ATPase KdpC subunit.